The primary structure comprises 346 residues: Methylthioribose-1-phosphate isomerase (346 aa).

Residues 46–48 (RGA), Arg-89, and Gln-196 contribute to the substrate site. The active-site Proton donor is the Asp-237. 247–248 (NK) provides a ligand contact to substrate.

Belongs to the eIF-2B alpha/beta/delta subunits family. MtnA subfamily.

The enzyme catalyses 5-(methylsulfanyl)-alpha-D-ribose 1-phosphate = 5-(methylsulfanyl)-D-ribulose 1-phosphate. The protein operates within amino-acid biosynthesis; L-methionine biosynthesis via salvage pathway; L-methionine from S-methyl-5-thio-alpha-D-ribose 1-phosphate: step 1/6. Catalyzes the interconversion of methylthioribose-1-phosphate (MTR-1-P) into methylthioribulose-1-phosphate (MTRu-1-P). The protein is Methylthioribose-1-phosphate isomerase of Geobacter metallireducens (strain ATCC 53774 / DSM 7210 / GS-15).